Here is a 236-residue protein sequence, read N- to C-terminus: Pyridoxine 5'-phosphate synthase (236 aa).

N7 serves as a coordination point for 3-amino-2-oxopropyl phosphate. 9–10 (DH) lines the 1-deoxy-D-xylulose 5-phosphate pocket. R18 lines the 3-amino-2-oxopropyl phosphate pocket. The active-site Proton acceptor is the H43. 1-deoxy-D-xylulose 5-phosphate-binding residues include R45 and H50. E69 (proton acceptor) is an active-site residue. T99 contacts 1-deoxy-D-xylulose 5-phosphate. H190 serves as the catalytic Proton donor. Residues G191 and 212 to 213 (GH) each bind 3-amino-2-oxopropyl phosphate.

Belongs to the PNP synthase family. In terms of assembly, homooctamer; tetramer of dimers.

The protein localises to the cytoplasm. The enzyme catalyses 3-amino-2-oxopropyl phosphate + 1-deoxy-D-xylulose 5-phosphate = pyridoxine 5'-phosphate + phosphate + 2 H2O + H(+). It functions in the pathway cofactor biosynthesis; pyridoxine 5'-phosphate biosynthesis; pyridoxine 5'-phosphate from D-erythrose 4-phosphate: step 5/5. Catalyzes the complicated ring closure reaction between the two acyclic compounds 1-deoxy-D-xylulose-5-phosphate (DXP) and 3-amino-2-oxopropyl phosphate (1-amino-acetone-3-phosphate or AAP) to form pyridoxine 5'-phosphate (PNP) and inorganic phosphate. This chain is Pyridoxine 5'-phosphate synthase, found in Desulfosudis oleivorans (strain DSM 6200 / JCM 39069 / Hxd3) (Desulfococcus oleovorans).